Here is a 214-residue protein sequence, read N- to C-terminus: uncharacterized protein (214 aa).

This is an uncharacterized protein from Methanocaldococcus jannaschii (strain ATCC 43067 / DSM 2661 / JAL-1 / JCM 10045 / NBRC 100440) (Methanococcus jannaschii).